The primary structure comprises 585 residues: Ras-specific guanine nucleotide-releasing factor RalGPS1 (585 aa).

Residues 50–289 (TPEEFASQIT…YKLSLRIEPG (240 aa)) form the Ras-GEF domain. Disordered regions lie at residues 289-342 (GSSS…KSHS) and 378-410 (RSPRRGLTHTSSTAITNGLSLGSSESSEFSEEM). Low complexity predominate over residues 303 to 312 (AGPSAGSSSA). The short motif at 330–333 (PTPP) is the PXXP element. The span at 385-396 (THTSSTAITNGL) shows a compositional bias: polar residues. Residues 459 to 571 (VPTMEGPLRR…WHKHLDDACK (113 aa)) form the PH domain. The segment at 461–585 (TMEGPLRRKT…QVPANLMSFE (125 aa)) is required for stimulation of nucleotide exchange by RALA.

Interacts with the SH3 domains of GRB2, NCK1, PLCG1 and SRC.

The protein resides in the cytoplasm. Its subcellular location is the cell membrane. In terms of biological role, guanine nucleotide exchange factor for the small GTPase RALA. May be involved in cytoskeleton organization. The sequence is that of Ras-specific guanine nucleotide-releasing factor RalGPS1 (Ralgps1) from Mus musculus (Mouse).